The following is a 356-amino-acid chain: Phospho-N-acetylmuramoyl-pentapeptide-transferase (356 aa).

Transmembrane regions (helical) follow at residues 25–45 (TVAA…SIIA), 70–90 (GTPT…AFLW), 93–113 (LSNI…MIGF), 138–158 (FLIA…GLAL), 164–184 (YFIN…VGTG), 195–215 (GLAI…AYLS), 235–255 (LAVL…FNAP), 258–278 (AIFM…IVAV), 284–304 (IVLA…VIQV), and 333–353 (QVVI…LSTL).

It belongs to the glycosyltransferase 4 family. MraY subfamily. Mg(2+) serves as cofactor.

The protein resides in the cell inner membrane. It catalyses the reaction UDP-N-acetyl-alpha-D-muramoyl-L-alanyl-gamma-D-glutamyl-meso-2,6-diaminopimeloyl-D-alanyl-D-alanine + di-trans,octa-cis-undecaprenyl phosphate = di-trans,octa-cis-undecaprenyl diphospho-N-acetyl-alpha-D-muramoyl-L-alanyl-D-glutamyl-meso-2,6-diaminopimeloyl-D-alanyl-D-alanine + UMP. It participates in cell wall biogenesis; peptidoglycan biosynthesis. Catalyzes the initial step of the lipid cycle reactions in the biosynthesis of the cell wall peptidoglycan: transfers peptidoglycan precursor phospho-MurNAc-pentapeptide from UDP-MurNAc-pentapeptide onto the lipid carrier undecaprenyl phosphate, yielding undecaprenyl-pyrophosphoryl-MurNAc-pentapeptide, known as lipid I. The protein is Phospho-N-acetylmuramoyl-pentapeptide-transferase of Bartonella quintana (strain Toulouse) (Rochalimaea quintana).